The following is a 330-amino-acid chain: Phenylalanine--tRNA ligase alpha subunit (330 aa).

Glu246 contributes to the Mg(2+) binding site.

It belongs to the class-II aminoacyl-tRNA synthetase family. Phe-tRNA synthetase alpha subunit type 1 subfamily. Tetramer of two alpha and two beta subunits. It depends on Mg(2+) as a cofactor.

The protein localises to the cytoplasm. It carries out the reaction tRNA(Phe) + L-phenylalanine + ATP = L-phenylalanyl-tRNA(Phe) + AMP + diphosphate + H(+). The polypeptide is Phenylalanine--tRNA ligase alpha subunit (Campylobacter jejuni subsp. jejuni serotype O:6 (strain 81116 / NCTC 11828)).